The following is a 128-amino-acid chain: MRNESERRAAARRRAEHRGRDAERRVAGWYAAQGFVVLAQRLRTAAGELDLVVADRTTLVFVEVKARNALRSAIESVAPRQRRRLVAAAAIVLAGQPDWGRAETRFDVVLLVGDDVHAIRDAFRADDP.

Belongs to the UPF0102 family.

This Acidiphilium cryptum (strain JF-5) protein is UPF0102 protein Acry_2261.